A 600-amino-acid polypeptide reads, in one-letter code: Chaperone protein DnaK (600 aa).

T175 carries the phosphothreonine; by autocatalysis modification. The span at 569 to 578 (SFAQATAQQA) shows a compositional bias: low complexity. The disordered stretch occupies residues 569–600 (SFAQATAQQANTSESDPKADDSNTIDAEIKQD). Residues 583-600 (SDPKADDSNTIDAEIKQD) show a composition bias toward basic and acidic residues.

It belongs to the heat shock protein 70 family.

Functionally, acts as a chaperone. This Mesomycoplasma hyopneumoniae (strain J / ATCC 25934 / NCTC 10110) (Mycoplasma hyopneumoniae) protein is Chaperone protein DnaK.